The following is a 286-amino-acid chain: ATP synthase gamma chain (286 aa).

Belongs to the ATPase gamma chain family. As to quaternary structure, F-type ATPases have 2 components, CF(1) - the catalytic core - and CF(0) - the membrane proton channel. CF(1) has five subunits: alpha(3), beta(3), gamma(1), delta(1), epsilon(1). CF(0) has three main subunits: a, b and c.

Its subcellular location is the cell inner membrane. Functionally, produces ATP from ADP in the presence of a proton gradient across the membrane. The gamma chain is believed to be important in regulating ATPase activity and the flow of protons through the CF(0) complex. The protein is ATP synthase gamma chain of Pseudomonas aeruginosa (strain UCBPP-PA14).